Here is a 384-residue protein sequence, read N- to C-terminus: S-adenosylmethionine synthase (384 aa).

Histidine 15 is an ATP binding site. Aspartate 17 provides a ligand contact to Mg(2+). Residue glutamate 43 participates in K(+) binding. L-methionine is bound by residues glutamate 56 and glutamine 99. Residues 99 to 109 (QSPDINQGVDR) are flexible loop. ATP-binding positions include 164–166 (DAK), 231–232 (RF), aspartate 240, 246–247 (RK), alanine 263, and lysine 267. Aspartate 240 lines the L-methionine pocket. Position 271 (lysine 271) interacts with L-methionine.

The protein belongs to the AdoMet synthase family. In terms of assembly, homotetramer; dimer of dimers. The cofactor is Mg(2+). Requires K(+) as cofactor.

It localises to the cytoplasm. The catalysed reaction is L-methionine + ATP + H2O = S-adenosyl-L-methionine + phosphate + diphosphate. The protein operates within amino-acid biosynthesis; S-adenosyl-L-methionine biosynthesis; S-adenosyl-L-methionine from L-methionine: step 1/1. Its function is as follows. Catalyzes the formation of S-adenosylmethionine (AdoMet) from methionine and ATP. The overall synthetic reaction is composed of two sequential steps, AdoMet formation and the subsequent tripolyphosphate hydrolysis which occurs prior to release of AdoMet from the enzyme. This Shewanella halifaxensis (strain HAW-EB4) protein is S-adenosylmethionine synthase.